A 238-amino-acid chain; its full sequence is Cysteine-rich venom protein pseudechetoxin-like (238 aa).

The first 19 residues, 1-19 (MIAFIVLLSLAAVLQQSSG), serve as a signal peptide directing secretion. The propeptide occupies 20–28 (TVDFASESS). An SCP domain is found at 38–164 (VDKHNALRRS…STKYLYVCQY (127 aa)). Disulfide bonds link Cys-75–Cys-153, Cys-92–Cys-165, Cys-148–Cys-162, Cys-184–Cys-191, Cys-187–Cys-196, Cys-200–Cys-233, Cys-209–Cys-227, and Cys-218–Cys-231. The region spanning 200 to 233 (CKHEDDFSNCKALAKNSKCQTAWIKSKCPATCFC) is the ShKT domain.

Belongs to the CRISP family. In terms of tissue distribution, expressed by the venom gland.

It localises to the secreted. Blocks olfactory (CNGA2) and retinal (CNGA1) CNG channel currents. Does not affect neither depolarization- nor caffeine-induced contraction of smooth muscle. This Hoplocephalus stephensii (Stephens's banded snake) protein is Cysteine-rich venom protein pseudechetoxin-like.